Here is a 348-residue protein sequence, read N- to C-terminus: Phosphoribosylformylglycinamidine cyclo-ligase (348 aa).

The protein belongs to the AIR synthase family.

It is found in the cytoplasm. The enzyme catalyses 2-formamido-N(1)-(5-O-phospho-beta-D-ribosyl)acetamidine + ATP = 5-amino-1-(5-phospho-beta-D-ribosyl)imidazole + ADP + phosphate + H(+). Its pathway is purine metabolism; IMP biosynthesis via de novo pathway; 5-amino-1-(5-phospho-D-ribosyl)imidazole from N(2)-formyl-N(1)-(5-phospho-D-ribosyl)glycinamide: step 2/2. This is Phosphoribosylformylglycinamidine cyclo-ligase from Ruegeria sp. (strain TM1040) (Silicibacter sp.).